A 790-amino-acid chain; its full sequence is uncharacterized protein (790 aa).

In terms of domain architecture, TBDR plug spans 37–172 (APVPVPVNGN…NGGVIDAKIK (136 aa)). The 613-residue stretch at 178-790 (DSKVKLGYRT…TFWLDVSMKF (613 aa)) folds into the TBDR beta-barrel domain.

It belongs to the TonB-dependent receptor family.

The protein resides in the cell outer membrane. This is an uncharacterized protein from Escherichia coli (strain K12).